We begin with the raw amino-acid sequence, 317 residues long: MYTKIIGTGSYLPEQVRTNADLEKMVETSDEWIVTRTGIRERHIAAPNETVATMGFTAANRAIEMAGIDKDQIGLIVVATTSATHAFPSAACQIQSMLGIKGCPAFDVAAACAGFTYALSIADQYVKSGVVKHALVVGSDVLARTCDPGDRGTIIIFGDGAGAAVLSASEEPGIISTHLHADGRYGELLTLPNADRVNPDNPIYLTMAGNEVFKVAVTELAHIVDETLAANNLDRSELDWLVPHQANLRIISATAKKLGMSMDNVVVTLDRHGNTSAASVPCALDEAVRDGRIKAGQLVLLEAFGGGFTWGSALIRF.

Active-site residues include Cys-112 and His-244. The ACP-binding stretch occupies residues 245–249 (QANLR). The active site involves Asn-274.

The protein belongs to the thiolase-like superfamily. FabH family. As to quaternary structure, homodimer.

The protein resides in the cytoplasm. The enzyme catalyses malonyl-[ACP] + acetyl-CoA + H(+) = 3-oxobutanoyl-[ACP] + CO2 + CoA. It functions in the pathway lipid metabolism; fatty acid biosynthesis. Catalyzes the condensation reaction of fatty acid synthesis by the addition to an acyl acceptor of two carbons from malonyl-ACP. Catalyzes the first condensation reaction which initiates fatty acid synthesis and may therefore play a role in governing the total rate of fatty acid production. Possesses both acetoacetyl-ACP synthase and acetyl transacylase activities. Its substrate specificity determines the biosynthesis of branched-chain and/or straight-chain of fatty acids. The protein is Beta-ketoacyl-[acyl-carrier-protein] synthase III of Salmonella typhi.